A 459-amino-acid polypeptide reads, in one-letter code: Cysteine--tRNA ligase (459 aa).

Residue C28 coordinates Zn(2+). A 'HIGH' region motif is present at residues 30 to 40 (ITIYDLCHIGH). Residues C209, H234, and E238 each contribute to the Zn(2+) site. A 'KMSKS' region motif is present at residues 266–270 (KMSKS). K269 is a binding site for ATP.

The protein belongs to the class-I aminoacyl-tRNA synthetase family. Monomer. Requires Zn(2+) as cofactor.

It is found in the cytoplasm. It catalyses the reaction tRNA(Cys) + L-cysteine + ATP = L-cysteinyl-tRNA(Cys) + AMP + diphosphate. The polypeptide is Cysteine--tRNA ligase (Shewanella denitrificans (strain OS217 / ATCC BAA-1090 / DSM 15013)).